A 686-amino-acid chain; its full sequence is MQEYHIHNLDCPDCASKLERDLNELDYVKKAQINFSTSKLFLDTSDFEKVKAFIKQNEPHLSLSFKEATEKPLSFTPLIITIMVFLGAILILHLNPSPLIEKAMFFVLALVYLVSGKDVILGAFRGLRKGQFFDENALMLIATIAAFFVGAYEESVSIMVFYSAGEFLQKLAVSRSKKSLKALVDVAPNLAYLKKGDELVSVAPEDLRVNDIVVVKVGEKVPVDGVVVKGESLLDERALSGESMPVNVSENSKVLGGSLNLKAVLEIQVEKMYKDSSIAKVVDLVQQATNEKSETEKFITKFSRYYTPSVLFIALMIAVLPPLFSMGSFDEWIYRGLVALMVSCPCALVISVPLGYFGGVGAASRKGILMKGVHVLEVLTQAKSIAFDKTGTLTKGVFKVTDIVPQNGHSKEEVLHYASCSQLLSTHPIALSIQKACEEMLKDDKHQHDIKNYEEVSGMGVKAQCHTDLIIAGNEKMLDQFHIAHSPSKENGTIVHVAFNQTYVGYIVISDEIKDDAIECLRDLKVQGIENFCILSGDRKSATESIAQTLGCEYHASLLPEEKTSVFKTFKERYKAPAIFVGDGINDAPTLASADVGIGMGKGSELSKQSADIVITNDSLNSLVKVLAIAKKTKSIIWQNILFALGIKAVFIVLGLMGVASLWEAVFGDVGVTLLALANSMRAMRA.

Positions 1-62 constitute an HMA domain; that stretch reads MQEYHIHNLD…FIKQNEPHLS (62 aa). Residues 1–72 are Cytoplasmic-facing; the sequence is MQEYHIHNLD…LSFKEATEKP (72 aa). The Cd(2+) site is built by Cys11 and Cys14. The Co(2+) site is built by Cys11 and Cys14. Zn(2+) is bound by residues Cys11 and Cys14. A helical transmembrane segment spans residues 73-92; the sequence is LSFTPLIITIMVFLGAILIL. The Extracellular segment spans residues 93–102; that stretch reads HLNPSPLIEK. The chain crosses the membrane as a helical span at residues 103–124; it reads AMFFVLALVYLVSGKDVILGAF. The Cytoplasmic segment spans residues 125–131; that stretch reads RGLRKGQ. Residues 132-151 form a helical membrane-spanning segment; sequence FFDENALMLIATIAAFFVGA. Residues 152–154 lie on the Extracellular side of the membrane; sequence YEE. A helical transmembrane segment spans residues 155–174; the sequence is SVSIMVFYSAGEFLQKLAVS. The Cytoplasmic segment spans residues 175 to 308; it reads RSKKSLKALV…ITKFSRYYTP (134 aa). The chain crosses the membrane as a helical span at residues 309-327; that stretch reads SVLFIALMIAVLPPLFSMG. Residues 328 to 332 lie on the Extracellular side of the membrane; that stretch reads SFDEW. The helical transmembrane segment at 333-350 threads the bilayer; the sequence is IYRGLVALMVSCPCALVI. Topologically, residues 351 to 635 are cytoplasmic; the sequence is SVPLGYFGGV…VLAIAKKTKS (285 aa). The 4-aspartylphosphate intermediate role is filled by Asp388. Positions 583 and 587 each coordinate Mg(2+). A helical membrane pass occupies residues 636-657; the sequence is IIWQNILFALGIKAVFIVLGLM. Residues 658-665 lie on the Extracellular side of the membrane; sequence GVASLWEA. The chain crosses the membrane as a helical span at residues 666-681; sequence VFGDVGVTLLALANSM. Over 682-686 the chain is Cytoplasmic; that stretch reads RAMRA.

This sequence belongs to the cation transport ATPase (P-type) (TC 3.A.3) family. Type IB subfamily.

The protein localises to the cell membrane. The enzyme catalyses Zn(2+)(in) + ATP + H2O = Zn(2+)(out) + ADP + phosphate + H(+). It catalyses the reaction Cd(2+)(in) + ATP + H2O = Cd(2+)(out) + ADP + phosphate + H(+). In terms of biological role, couples the hydrolysis of ATP with the transport of cadmium, zinc and cobalt out of the cell. This ion efflux may influence the activity of urease, which is essential for the survival of the bacterium in the gastric environment. The protein is Cadmium, zinc and cobalt-transporting ATPase (cadA) of Helicobacter pylori (strain ATCC 700392 / 26695) (Campylobacter pylori).